The chain runs to 294 residues: Nucleotide-binding protein LCA_0526 (294 aa).

Gly-12–Thr-19 contacts ATP. Asp-62–Ser-65 is a binding site for GTP.

Belongs to the RapZ-like family.

Functionally, displays ATPase and GTPase activities. The polypeptide is Nucleotide-binding protein LCA_0526 (Latilactobacillus sakei subsp. sakei (strain 23K) (Lactobacillus sakei subsp. sakei)).